The sequence spans 549 residues: Cytoplasmic trehalase (549 aa).

Residues R168, 175 to 176, N212, 221 to 223, 292 to 294, and G324 contribute to the substrate site; these read WD, RSQ, and RDE. Catalysis depends on proton donor/acceptor residues D326 and E509. Residue E525 participates in substrate binding.

It belongs to the glycosyl hydrolase 37 family. As to quaternary structure, monomer.

Its subcellular location is the cytoplasm. The catalysed reaction is alpha,alpha-trehalose + H2O = alpha-D-glucose + beta-D-glucose. The protein operates within glycan degradation; trehalose degradation; D-glucose from alpha,alpha-trehalose: step 1/1. Hydrolyzes trehalose to glucose. Could be involved, in cells returning to low osmolarity conditions, in the utilization of the accumulated cytoplasmic trehalose, which was synthesized in response to high osmolarity. The chain is Cytoplasmic trehalase from Salmonella typhi.